Reading from the N-terminus, the 130-residue chain is Small ribosomal subunit protein uS11 (130 aa).

It belongs to the universal ribosomal protein uS11 family. In terms of assembly, part of the 30S ribosomal subunit. Interacts with proteins S7 and S18. Binds to IF-3.

Its function is as follows. Located on the platform of the 30S subunit, it bridges several disparate RNA helices of the 16S rRNA. Forms part of the Shine-Dalgarno cleft in the 70S ribosome. This Campylobacter lari (strain RM2100 / D67 / ATCC BAA-1060) protein is Small ribosomal subunit protein uS11.